Here is a 776-residue protein sequence, read N- to C-terminus: Heat shock protein 110 (776 aa).

The interval 741–776 (ILNKKKPAAPAPPKKEEPQPAAGDQPQSQPGEMDVD) is disordered.

Belongs to the heat shock protein 70 family.

The polypeptide is Heat shock protein 110 (Caenorhabditis elegans).